Consider the following 164-residue polypeptide: UPF0304 protein ESA_00925 (164 aa).

The protein belongs to the UPF0304 family.

This is UPF0304 protein ESA_00925 from Cronobacter sakazakii (strain ATCC BAA-894) (Enterobacter sakazakii).